Reading from the N-terminus, the 407-residue chain is Putative cystathionine beta-lyase (407 aa).

K237 carries the post-translational modification N6-(pyridoxal phosphate)lysine.

It belongs to the class-II pyridoxal-phosphate-dependent aminotransferase family. MalY/PatB cystathionine beta-lyase subfamily. The cofactor is pyridoxal 5'-phosphate.

It carries out the reaction L,L-cystathionine + H2O = L-homocysteine + pyruvate + NH4(+). It catalyses the reaction an S-substituted L-cysteine + H2O = a thiol + pyruvate + NH4(+). It functions in the pathway amino-acid biosynthesis; L-methionine biosynthesis via de novo pathway; L-homocysteine from L-cystathionine: step 1/1. The chain is Putative cystathionine beta-lyase from Mycobacterium tuberculosis (strain CDC 1551 / Oshkosh).